Reading from the N-terminus, the 297-residue chain is Glycerol-3-phosphate dehydrogenase [NAD(P)+] (297 aa).

Positions 11, 33, and 79 each coordinate NADPH. Sn-glycerol 3-phosphate is bound by residues K79, G107, and S109. Residue A111 participates in NADPH binding. 5 residues coordinate sn-glycerol 3-phosphate: K161, D214, S224, R225, and N226. K161 serves as the catalytic Proton acceptor. Position 225 (R225) interacts with NADPH. The NADPH site is built by V249 and E251.

This sequence belongs to the NAD-dependent glycerol-3-phosphate dehydrogenase family.

Its subcellular location is the cytoplasm. The catalysed reaction is sn-glycerol 3-phosphate + NAD(+) = dihydroxyacetone phosphate + NADH + H(+). It carries out the reaction sn-glycerol 3-phosphate + NADP(+) = dihydroxyacetone phosphate + NADPH + H(+). Its pathway is membrane lipid metabolism; glycerophospholipid metabolism. Its function is as follows. Catalyzes the reduction of the glycolytic intermediate dihydroxyacetone phosphate (DHAP) to sn-glycerol 3-phosphate (G3P), the key precursor for phospholipid synthesis. In Campylobacter jejuni subsp. jejuni serotype O:6 (strain 81116 / NCTC 11828), this protein is Glycerol-3-phosphate dehydrogenase [NAD(P)+].